A 209-amino-acid chain; its full sequence is Uridine kinase (209 aa).

12-19 is an ATP binding site; that stretch reads GGSGSGKT.

This sequence belongs to the uridine kinase family.

Its subcellular location is the cytoplasm. It catalyses the reaction uridine + ATP = UMP + ADP + H(+). The catalysed reaction is cytidine + ATP = CMP + ADP + H(+). Its pathway is pyrimidine metabolism; CTP biosynthesis via salvage pathway; CTP from cytidine: step 1/3. It participates in pyrimidine metabolism; UMP biosynthesis via salvage pathway; UMP from uridine: step 1/1. This Listeria innocua serovar 6a (strain ATCC BAA-680 / CLIP 11262) protein is Uridine kinase.